A 125-amino-acid chain; its full sequence is uncharacterized protein (125 aa).

Helical transmembrane passes span 28–48 and 54–74; these read VFITHLFFLLHSLLLFLSQFC and FFLPTINLVTHSIKFITLFFF.

The protein localises to the membrane. This is an uncharacterized protein from Saccharomyces cerevisiae (strain ATCC 204508 / S288c) (Baker's yeast).